Reading from the N-terminus, the 123-residue chain is uncharacterized protein (123 aa).

This is an uncharacterized protein from Homo sapiens (Human).